The sequence spans 426 residues: Branched-chain amino acid permease BrnQ (426 aa).

12 helical membrane passes run 11-31 (LMLF…MLGL), 41-61 (ILGF…AVVL), 76-96 (IFGL…YALP), 111-131 (NALY…ALSW), 140-160 (LGKW…VLSV), 186-206 (GYMT…ISAF), 219-239 (VVSA…LGSI), 268-288 (IMFV…LISA), 296-316 (LLPG…SFGV), 324-344 (VLAV…TLVF), 358-378 (TYLF…IPAL), and 390-410 (MSLG…AIDW).

The protein belongs to the branched chain amino acid transporter family.

It is found in the cell membrane. Branched chain amino acid transport system, which transports isoleucine. The polypeptide is Branched-chain amino acid permease BrnQ (Corynebacterium glutamicum (strain ATCC 13032 / DSM 20300 / JCM 1318 / BCRC 11384 / CCUG 27702 / LMG 3730 / NBRC 12168 / NCIMB 10025 / NRRL B-2784 / 534)).